Reading from the N-terminus, the 59-residue chain is Large ribosomal subunit protein uL30 (59 aa).

This sequence belongs to the universal ribosomal protein uL30 family. In terms of assembly, part of the 50S ribosomal subunit.

The polypeptide is Large ribosomal subunit protein uL30 (Edwardsiella ictaluri (strain 93-146)).